The primary structure comprises 490 residues: Protein U94 (490 aa).

Residues 1–210 (MFSIINPSDD…SHFNKKPNVK (210 aa)) form the PV NS1-Nuc domain. Residues 312-463 (DPILAGTILY…IPRNFPVIQK (152 aa)) enclose the SF3 helicase domain. ATP is bound at residue 338 to 345 (GPPGCGKS).

The protein resides in the host nucleus. This is Protein U94 (U94) from Human herpesvirus 6B (HHV-6 variant B).